A 330-amino-acid chain; its full sequence is DNA primase small subunit PriS (330 aa).

Residues aspartate 101 and aspartate 103 contribute to the active site. Positions 116, 119, 128, and 131 each coordinate Zn(2+). Residue aspartate 235 is part of the active site.

The protein belongs to the eukaryotic-type primase small subunit family. In terms of assembly, heterodimer of a small subunit (PriS) and a large subunit (PriL). The cofactor is Mg(2+). Mn(2+) serves as cofactor.

Catalytic subunit of DNA primase, an RNA polymerase that catalyzes the synthesis of short RNA molecules used as primers for DNA polymerase during DNA replication. The small subunit contains the primase catalytic core and has DNA synthesis activity on its own. Binding to the large subunit stabilizes and modulates the activity, increasing the rate of DNA synthesis while decreasing the length of the DNA fragments, and conferring RNA synthesis capability. The DNA polymerase activity may enable DNA primase to also catalyze primer extension after primer synthesis. May also play a role in DNA repair. Possesses a template-independent 3'-terminal nucleotidyl transferase activity. This chain is DNA primase small subunit PriS, found in Saccharolobus solfataricus (strain ATCC 35092 / DSM 1617 / JCM 11322 / P2) (Sulfolobus solfataricus).